We begin with the raw amino-acid sequence, 176 residues long: Protein MAL2 (176 aa).

Residues 1–34 (MSAGGASVPPPPNPAVSFPPPRVTLPAGPDILRT) are Cytoplasmic-facing. Residues 31–175 (ILRTYSGAFV…SLGLALRRWR (145 aa)) form the MARVEL domain. A helical membrane pass occupies residues 35-55 (YSGAFVCLEILFGGLVWILVA). Residues 56 to 66 (SSNVPLPLLQG) are Lumenal-facing. A helical membrane pass occupies residues 67–87 (WVMFVSVTAFFFSLLFLGMFL). At 88 to 102 (SGMVAQIDANWNFLD) the chain is on the cytoplasmic side. A helical membrane pass occupies residues 103 to 123 (FAYHFTVFVFYFGAFLLEAAA). Over 124–149 (TSLHDLHCNTTITGQPLLSDNQYNIN) the chain is Lumenal. N-linked (GlcNAc...) asparagine glycosylation is present at asparagine 132. Residues 150–170 (VAASIFAFMTTACYGCSLGLA) traverse the membrane as a helical segment. Topologically, residues 171–176 (LRRWRP) are cytoplasmic.

Belongs to the MAL family. As to quaternary structure, interacts with TPD52L2. As to expression, predominantly expressed in kidney, lung, and liver. Also found in thyroid gland, stomach and, at lower levels in testis and small intestine.

It is found in the cell membrane. The protein resides in the apical cell membrane. Its subcellular location is the endomembrane system. It localises to the cytoplasm. The protein localises to the perinuclear region. In terms of biological role, member of the machinery of polarized transport. Required for the indirect transcytotic route at the step of the egress of the transcytosing cargo from perinuclear endosomes in order for it to travel to the apical surface via a raft-dependent pathway. This Homo sapiens (Human) protein is Protein MAL2 (MAL2).